A 421-amino-acid polypeptide reads, in one-letter code: MTKDIAQVMAEVGRKAKAAAAPLSIATSEQKNKALNAAADAILEARADILEANRLDLANAEKNGMAASFVDRLTLNEARIDAIAEGIRAIATLPDPVGEVIAEWDRPNGLHIERVRTPLGVIGVIYESRPNVTADAGALCLKAGNAVILRGGSDSAHSSAAIHKALVKGLEAANLPADAIQIVPVTDRAAVGEMLKGLGGAIDVIVPRGGKSLVARVQSEARVPVFAHLEGICHLYIDKSADLDMARRIALDAKMRRTGICGAAETLLVDRAVASTHLAPILGDLAAGGCEIRGSAEVLALYPAAKPATEEDWSTEYLDAIISVALVDGISGAIDHINRYSSHHTEAIVAEDAQTVARFFNEIDSAILLHNASTQFADGGEFGMGAEIGIATGKMHARGPVGVEQLTSFKYRVRGSGQVRG.

This sequence belongs to the gamma-glutamyl phosphate reductase family.

The protein localises to the cytoplasm. It catalyses the reaction L-glutamate 5-semialdehyde + phosphate + NADP(+) = L-glutamyl 5-phosphate + NADPH + H(+). It participates in amino-acid biosynthesis; L-proline biosynthesis; L-glutamate 5-semialdehyde from L-glutamate: step 2/2. Catalyzes the NADPH-dependent reduction of L-glutamate 5-phosphate into L-glutamate 5-semialdehyde and phosphate. The product spontaneously undergoes cyclization to form 1-pyrroline-5-carboxylate. The polypeptide is Gamma-glutamyl phosphate reductase (Brucella abortus (strain 2308)).